A 217-amino-acid polypeptide reads, in one-letter code: Oxygen regulatory protein NreC (217 aa).

Positions 2 to 119 (KIVIADDHAV…QLLLAIRTVY (118 aa)) constitute a Response regulatory domain. Residue Asp53 is modified to 4-aspartylphosphate. Positions 148 to 213 (TTDPFKILSK…ELVEYALKKK (66 aa)) constitute an HTH luxR-type domain. A DNA-binding region (H-T-H motif) is located at residues 172 to 191 (NKEIAEKLFVSVKTVEAHKT).

Post-translationally, phosphorylated by NreB.

It localises to the cytoplasm. Its function is as follows. Member of the two-component regulatory system NreB/NreC involved in the control of dissimilatory nitrate/nitrite reduction in response to oxygen. Phosphorylated NreC binds to a GC-rich palindromic sequence at the promoters of the nitrate (narGHJI) and nitrite (nir) reductase operons, as well as the putative nitrate transporter gene narT, and activates their expression. The sequence is that of Oxygen regulatory protein NreC (nreC) from Staphylococcus aureus (strain USA300 / TCH1516).